Consider the following 99-residue polypeptide: Protein Tat (99 aa).

A disordered region spans residues 1 to 22 (MDPVDPNLEPWNHPGSQPRTPC). The segment at 1–24 (MDPVDPNLEPWNHPGSQPRTPCNK) is interaction with human CREBBP. The tract at residues 1–48 (MDPVDPNLEPWNHPGSQPRTPCNKCHCKKCCYHCPVCFLNKGLGISYG) is transactivation. Residues cysteine 22, cysteine 25, and cysteine 27 each coordinate Zn(2+). Residues 22–37 (CNKCHCKKCCYHCPVC) form a cysteine-rich region. At lysine 28 the chain carries N6-acetyllysine; by host PCAF. Residues cysteine 30, histidine 33, cysteine 34, and cysteine 37 each contribute to the Zn(2+) site. Positions 38-48 (FLNKGLGISYG) are core. The interval 48–99 (GRKKRRQRRGPPQGGQAHQVPIPKQPSSQPRGDPTGPKEQKKKVESEAETDP) is disordered. A Nuclear localization signal, RNA-binding (TAR), and protein transduction motif is present at residues 49-57 (RKKRRQRRG). Residues 49–86 (RKKRRQRRGPPQGGQAHQVPIPKQPSSQPRGDPTGPKE) form an interaction with the host capping enzyme RNGTT region. 2 positions are modified to N6-acetyllysine; by host EP300 and GCN5L2: lysine 50 and lysine 51. Arginine 52 and arginine 53 each carry asymmetric dimethylarginine; by host PRMT6. Lysine 71 is covalently cross-linked (Glycyl lysine isopeptide (Lys-Gly) (interchain with G-Cter in ubiquitin)). The Cell attachment site signature appears at 78–80 (RGD). Over residues 83-93 (GPKEQKKKVES) the composition is skewed to basic and acidic residues.

This sequence belongs to the lentiviruses Tat family. Interacts with host CCNT1. Associates with the P-TEFb complex composed at least of Tat, P-TEFb (CDK9 and CCNT1), TAR RNA, RNA Pol II. Recruits the HATs CREBBP, TAF1/TFIID, EP300, PCAF and GCN5L2. Interacts with host KAT5/Tip60; this interaction targets the latter to degradation. Interacts with the host deacetylase SIRT1. Interacts with host capping enzyme RNGTT; this interaction stimulates RNGTT. Binds to host KDR, and to the host integrins ITGAV/ITGB3 and ITGA5/ITGB1. Interacts with host KPNB1/importin beta-1 without previous binding to KPNA1/importin alpha-1. Interacts with EIF2AK2. Interacts with host nucleosome assembly protein NAP1L1; this interaction may be required for the transport of Tat within the nucleus, since the two proteins interact at the nuclear rim. Interacts with host C1QBP/SF2P32; this interaction involves lysine-acetylated Tat. Interacts with the host chemokine receptors CCR2, CCR3 and CXCR4. Interacts with host DPP4/CD26; this interaction may trigger an anti-proliferative effect. Interacts with host LDLR. Interacts with the host extracellular matrix metalloproteinase MMP1. Interacts with host PRMT6; this interaction mediates Tat's methylation. Interacts with, and is ubiquitinated by MDM2/Hdm2. Interacts with host PSMC3 and HTATIP2. Interacts with STAB1; this interaction may overcome SATB1-mediated repression of IL2 and IL2RA (interleukin) in T cells by binding to the same domain than HDAC1. Interacts (when acetylated) with human CDK13, thereby increasing HIV-1 mRNA splicing and promoting the production of the doubly spliced HIV-1 protein Nef. Interacts with host TBP; this interaction modulates the activity of transcriptional pre-initiation complex. Interacts with host RELA. Interacts with host PLSCR1; this interaction negatively regulates Tat transactivation activity by altering its subcellular distribution. Asymmetrical arginine methylation by host PRMT6 seems to diminish the transactivation capacity of Tat and affects the interaction with host CCNT1. In terms of processing, acetylation by EP300, CREBBP, GCN5L2/GCN5 and PCAF regulates the transactivation activity of Tat. EP300-mediated acetylation of Lys-50 promotes dissociation of Tat from the TAR RNA through the competitive binding to PCAF's bromodomain. In addition, the non-acetylated Tat's N-terminus can also interact with PCAF. PCAF-mediated acetylation of Lys-28 enhances Tat's binding to CCNT1. Lys-50 is deacetylated by SIRT1. Post-translationally, polyubiquitination by host MDM2 does not target Tat to degradation, but activates its transactivation function and fosters interaction with CCNT1 and TAR RNA. Phosphorylated by EIF2AK2 on serine and threonine residues adjacent to the basic region important for TAR RNA binding and function. Phosphorylation of Tat by EIF2AK2 is dependent on the prior activation of EIF2AK2 by dsRNA.

The protein localises to the host nucleus. Its subcellular location is the host nucleolus. The protein resides in the host cytoplasm. It is found in the secreted. In terms of biological role, transcriptional activator that increases RNA Pol II processivity, thereby increasing the level of full-length viral transcripts. Recognizes a hairpin structure at the 5'-LTR of the nascent viral mRNAs referred to as the transactivation responsive RNA element (TAR) and recruits the cyclin T1-CDK9 complex (P-TEFb complex) that will in turn hyperphosphorylate the RNA polymerase II to allow efficient elongation. The CDK9 component of P-TEFb and other Tat-activated kinases hyperphosphorylate the C-terminus of RNA Pol II that becomes stabilized and much more processive. Other factors such as HTATSF1/Tat-SF1, SUPT5H/SPT5, and HTATIP2 are also important for Tat's function. Besides its effect on RNA Pol II processivity, Tat induces chromatin remodeling of proviral genes by recruiting the histone acetyltransferases (HATs) CREBBP, EP300 and PCAF to the chromatin. This also contributes to the increase in proviral transcription rate, especially when the provirus integrates in transcriptionally silent region of the host genome. To ensure maximal activation of the LTR, Tat mediates nuclear translocation of NF-kappa-B by interacting with host RELA. Through its interaction with host TBP, Tat may also modulate transcription initiation. Tat can reactivate a latently infected cell by penetrating in it and transactivating its LTR promoter. In the cytoplasm, Tat is thought to act as a translational activator of HIV-1 mRNAs. Its function is as follows. Extracellular circulating Tat can be endocytosed by surrounding uninfected cells via the binding to several surface receptors such as CD26, CXCR4, heparan sulfate proteoglycans (HSPG) or LDLR. Neurons are rarely infected, but they internalize Tat via their LDLR. Through its interaction with nuclear HATs, Tat is potentially able to control the acetylation-dependent cellular gene expression. Modulates the expression of many cellular genes involved in cell survival, proliferation or in coding for cytokines or cytokine receptors. Tat plays a role in T-cell and neurons apoptosis. Tat induced neurotoxicity and apoptosis probably contribute to neuroAIDS. Circulating Tat also acts as a chemokine-like and/or growth factor-like molecule that binds to specific receptors on the surface of the cells, affecting many cellular pathways. In the vascular system, Tat binds to ITGAV/ITGB3 and ITGA5/ITGB1 integrins dimers at the surface of endothelial cells and competes with bFGF for heparin-binding sites, leading to an excess of soluble bFGF. The protein is Protein Tat of Homo sapiens (Human).